Reading from the N-terminus, the 151-residue chain is Ribosome maturation factor RimP (151 aa).

It belongs to the RimP family.

It is found in the cytoplasm. Functionally, required for maturation of 30S ribosomal subunits. The protein is Ribosome maturation factor RimP of Haemophilus influenzae (strain PittGG).